The primary structure comprises 68 residues: Medusin-AS (68 aa).

Residues 1-22 form the signal peptide; the sequence is MAFLKKSLFLVLFLGLVSLSVC. Positions 23–49 are excised as a propeptide; that stretch reads EEEKRESEEEKNEQEEDDRDERSEEKR. A disordered region spans residues 24-46; it reads EEKRESEEEKNEQEEDDRDERSE. Residues 31 to 41 show a composition bias toward acidic residues; the sequence is EEKNEQEEDDR. L67 carries the leucine amide modification.

This sequence belongs to the frog skin active peptide (FSAP) family. Medusin subfamily. As to expression, expressed by the skin glands.

The protein resides in the secreted. In terms of biological role, antimicrobial peptide active against Gram-positive bacteria and fungi but inactive against Gram-negative bacteria. Also inhibits growth of B.dendrobatidis zoospores at high concentrations. Shows anticancer activities. Shows hemolytic activity. In Agalychnis spurrelli (Gliding leaf frog), this protein is Medusin-AS.